The following is a 540-amino-acid chain: Phosphoenolpyruvate carboxykinase (ATP) (540 aa).

R65 contributes to the substrate binding site. The residue at position 87 (K87) is an N6-acetyllysine. Substrate is bound by residues Y207 and K213. ATP-binding positions include K213, H232, and 248 to 256 (GLSGTGKTT). Positions 213 and 232 each coordinate Mn(2+). Residue D269 participates in Mn(2+) binding. ATP-binding positions include E297, R333, 449 to 450 (RI), and T455. R333 provides a ligand contact to substrate. An N6-acetyllysine modification is found at K523.

It belongs to the phosphoenolpyruvate carboxykinase (ATP) family. Monomer. Mn(2+) serves as cofactor.

It is found in the cytoplasm. The catalysed reaction is oxaloacetate + ATP = phosphoenolpyruvate + ADP + CO2. It participates in carbohydrate biosynthesis; gluconeogenesis. Its function is as follows. Involved in the gluconeogenesis. Catalyzes the conversion of oxaloacetate (OAA) to phosphoenolpyruvate (PEP) through direct phosphoryl transfer between the nucleoside triphosphate and OAA. The chain is Phosphoenolpyruvate carboxykinase (ATP) from Escherichia fergusonii (strain ATCC 35469 / DSM 13698 / CCUG 18766 / IAM 14443 / JCM 21226 / LMG 7866 / NBRC 102419 / NCTC 12128 / CDC 0568-73).